We begin with the raw amino-acid sequence, 126 residues long: Large ribosomal subunit protein bL12 (126 aa).

This sequence belongs to the bacterial ribosomal protein bL12 family. As to quaternary structure, homodimer. Part of the ribosomal stalk of the 50S ribosomal subunit. Forms a multimeric L10(L12)X complex, where L10 forms an elongated spine to which 2 to 4 L12 dimers bind in a sequential fashion. Binds GTP-bound translation factors.

Forms part of the ribosomal stalk which helps the ribosome interact with GTP-bound translation factors. Is thus essential for accurate translation. The protein is Large ribosomal subunit protein bL12 of Methylorubrum populi (strain ATCC BAA-705 / NCIMB 13946 / BJ001) (Methylobacterium populi).